The sequence spans 174 residues: Large ribosomal subunit protein uL15 (174 aa).

Disordered regions lie at residues 1–57 and 147–174; these read MKLH…QMRI and PWVV…PQKA. Gly residues predominate over residues 21–35; the sequence is RGIGSGKGKTGGKGM.

This sequence belongs to the universal ribosomal protein uL15 family. Part of the 50S ribosomal subunit.

Binds to the 23S rRNA. In Roseiflexus sp. (strain RS-1), this protein is Large ribosomal subunit protein uL15.